Here is a 432-residue protein sequence, read N- to C-terminus: Glutamate-1-semialdehyde 2,1-aminomutase (432 aa).

Position 265 is an N6-(pyridoxal phosphate)lysine (lysine 265).

It belongs to the class-III pyridoxal-phosphate-dependent aminotransferase family. HemL subfamily. As to quaternary structure, homodimer. Requires pyridoxal 5'-phosphate as cofactor.

The protein localises to the cytoplasm. The enzyme catalyses (S)-4-amino-5-oxopentanoate = 5-aminolevulinate. Its pathway is porphyrin-containing compound metabolism; protoporphyrin-IX biosynthesis; 5-aminolevulinate from L-glutamyl-tRNA(Glu): step 2/2. In Histophilus somni (strain 2336) (Haemophilus somnus), this protein is Glutamate-1-semialdehyde 2,1-aminomutase.